Reading from the N-terminus, the 151-residue chain is MQVILKEKVENLGVLGDIVNVKPGYARNFLIPFGKAVQATQANIKAFEAQKAELEKAEKARFEAAVAVADAIKDKVYTIAAQAGEGGKLFGSVGTAEVAEAVSNQSGKKIEKSQVRMPEGVIRSIGEFELTVHVYTDVDADIKVNVVAAEA.

This sequence belongs to the bacterial ribosomal protein bL9 family.

Binds to the 23S rRNA. The protein is Large ribosomal subunit protein bL9 of Francisella tularensis subsp. tularensis (strain FSC 198).